Reading from the N-terminus, the 403-residue chain is Exodeoxyribonuclease 7 large subunit (403 aa).

Belongs to the XseA family. In terms of assembly, heterooligomer composed of large and small subunits.

Its subcellular location is the cytoplasm. It carries out the reaction Exonucleolytic cleavage in either 5'- to 3'- or 3'- to 5'-direction to yield nucleoside 5'-phosphates.. In terms of biological role, bidirectionally degrades single-stranded DNA into large acid-insoluble oligonucleotides, which are then degraded further into small acid-soluble oligonucleotides. This Streptomyces griseus subsp. griseus (strain JCM 4626 / CBS 651.72 / NBRC 13350 / KCC S-0626 / ISP 5235) protein is Exodeoxyribonuclease 7 large subunit.